Reading from the N-terminus, the 380-residue chain is MTNNKKLYLYKLSSKAMNYSMDKNERNVLYLNKYLHEYNNKGTKLQNSNMMNSWNNQLYKFNKNEVINTLLTDKLVSKLLVKLFVIKEMGINNPSYLQGSQMGRRIFINRPKFKHTINTVYINFNYNDTNMKMINNKHTLYYGSLIKDINNILGCFNYKNHNNELFNIATYLSGLYNKKVMIMPNKMKYNYNDNVIFNSSISYDLDKYKGGLAGKTYSKLLRDNIPMNNSLSIKNNYMTNIINNNNIKYNNMISNNSLNIKDIYKSFDINKITNELLVNKYLIGLSMLFKGKNIKKAGVSRSIKEKLLFGSLSNKLYRKNSGLLVYKNNNNTTKYLNFDININKKYKLNYMPNHHAISQLSKVNKAKTGVYGISVKLNTI.

Belongs to the universal ribosomal protein uS3 family.

It localises to the mitochondrion. Functionally, essential for mitochondrial protein synthesis and required for the maturation of small ribosomal subunits. This Cyberlindnera mrakii (Yeast) protein is Small ribosomal subunit protein uS3m (VAR1).